A 726-amino-acid polypeptide reads, in one-letter code: Eukaryotic translation initiation factor 3 subunit B (726 aa).

A sufficient for interaction with HCR1 and TIF32 region spans residues 1–94 (MSAALEDIKL…LFVECASPAD (94 aa)). A sufficient for interaction with PIC8 region spans residues 1–219 (MSAALEDIKL…GVVMWGGPHF (219 aa)). The RRM domain occupies 37–120 (QYIVVCGAPV…HRLFIYTMRD (84 aa)). WD repeat units lie at residues 142–182 (FPTS…EESV), 186–224 (RKNW…RLRR), 235–283 (VSPS…LQST), 331–374 (LKVP…MSCK), 442–485 (ELKD…FAPE), 505–549 (ITDK…TDKN), and 566–611 (NSFP…VKEE).

The protein belongs to the eIF-3 subunit B family. As to quaternary structure, component of the eukaryotic translation initiation factor 3 (eIF-3) complex.

The protein resides in the cytoplasm. RNA-binding component of the eukaryotic translation initiation factor 3 (eIF-3) complex, which is involved in protein synthesis of a specialized repertoire of mRNAs and, together with other initiation factors, stimulates binding of mRNA and methionyl-tRNAi to the 40S ribosome. The eIF-3 complex specifically targets and initiates translation of a subset of mRNAs involved in cell proliferation. The polypeptide is Eukaryotic translation initiation factor 3 subunit B (Vanderwaltozyma polyspora (strain ATCC 22028 / DSM 70294 / BCRC 21397 / CBS 2163 / NBRC 10782 / NRRL Y-8283 / UCD 57-17) (Kluyveromyces polysporus)).